A 95-amino-acid chain; its full sequence is Protein E7 (95 aa).

The interval 1–40 is E7 terminal domain; the sequence is MIGKEATIPDIVLELQQLVQPTDLHCYEELSEEETETEEE. An LXCXE motif; interaction with host RB1 and TMEM173/STING motif is present at residues 24 to 28; the sequence is LHCYE. A zinc finger lies at 52 to 88; it reads CCFCGSKLRLIVLATHAGIRSQEELLLGEVQLVCPNC. Positions 70–78 match the Nuclear export signal motif; sequence IRSQEELLL.

It belongs to the papillomaviridae E7 protein family. Homodimer. Homooligomer. Interacts with host RB1; this interaction induces dissociation of RB1-E2F1 complex thereby disrupting RB1 activity. Interacts with host EP300; this interaction represses EP300 transcriptional activity. Interacts with protein E2; this interaction inhibits E7 oncogenic activity. Interacts with host TMEM173/STING; this interaction impairs the ability of TMEM173/STING to sense cytosolic DNA and promote the production of type I interferon (IFN-alpha and IFN-beta). In terms of processing, highly phosphorylated.

The protein localises to the host cytoplasm. Its subcellular location is the host nucleus. Its function is as follows. Plays a role in viral genome replication by driving entry of quiescent cells into the cell cycle. Stimulation of progression from G1 to S phase allows the virus to efficiently use the cellular DNA replicating machinery to achieve viral genome replication. E7 protein has both transforming and trans-activating activities. Induces the disassembly of the E2F1 transcription factor from RB1, with subsequent transcriptional activation of E2F1-regulated S-phase genes. Interferes with host histone deacetylation mediated by HDAC1 and HDAC2, leading to transcription activation. Also plays a role in the inhibition of both antiviral and antiproliferative functions of host interferon alpha. Interaction with host TMEM173/STING impairs the ability of TMEM173/STING to sense cytosolic DNA and promote the production of type I interferon (IFN-alpha and IFN-beta). This chain is Protein E7, found in Human papillomavirus 17.